Consider the following 548-residue polypeptide: Protoporphyrinogen oxidase, chloroplastic (548 aa).

The transit peptide at Met1–Arg50 directs the protein to the chloroplast. Residues Gly78 to Gly83, Glu101 to Ala102, and Gly123 to Ser126 each bind FAD. Residues Lys265–Leu279 show a composition bias toward basic and acidic residues. The tract at residues Lys265–Val287 is disordered. Residue Val522–Leu524 participates in FAD binding.

It belongs to the protoporphyrinogen/coproporphyrinogen oxidase family. Protoporphyrinogen oxidase subfamily. As to quaternary structure, homodimer. It depends on FAD as a cofactor.

It localises to the plastid. The protein localises to the chloroplast. It carries out the reaction protoporphyrinogen IX + 3 O2 = protoporphyrin IX + 3 H2O2. Its pathway is porphyrin-containing compound metabolism; protoporphyrin-IX biosynthesis; protoporphyrin-IX from protoporphyrinogen-IX: step 1/1. The protein operates within porphyrin-containing compound metabolism; chlorophyll biosynthesis. Catalyzes the 6-electron oxidation of protoporphyrinogen-IX to form protoporphyrin-IX. This is Protoporphyrinogen oxidase, chloroplastic (PPXI) from Nicotiana tabacum (Common tobacco).